Consider the following 1081-residue polypeptide: Carbamoyl phosphate synthase large chain (1081 aa).

The segment at 1 to 410 is carboxyphosphate synthetic domain; that stretch reads MPKRTDIKTI…SFQKALRGLE (410 aa). ATP contacts are provided by Arg-129, Arg-176, Gly-182, Gly-183, Glu-215, Leu-217, Glu-222, Gly-248, Ile-249, His-250, Gln-292, and Glu-306. In terms of domain architecture, ATP-grasp 1 spans 133-335; sequence KEAMTKIGLG…IAKVAAKLAV (203 aa). Residues Gln-292, Glu-306, and Asn-308 each contribute to the Mg(2+) site. Mn(2+) is bound by residues Gln-292, Glu-306, and Asn-308. The interval 411–558 is oligomerization domain; the sequence is VGVDGLDEKS…YEAEHGECEA (148 aa). Residues 559 to 944 are carbamoyl phosphate synthetic domain; the sequence is DPTERKKIMV…ALFKSQLAAG (386 aa). The region spanning 683 to 878 is the ATP-grasp 2 domain; the sequence is QKLLHDLGLR…LAKVAARCMA (196 aa). Positions 719, 758, 760, 765, 790, 791, 792, 793, 833, and 849 each coordinate ATP. Gln-833, Glu-849, and Asn-851 together coordinate Mg(2+). Mn(2+)-binding residues include Gln-833, Glu-849, and Asn-851. An MGS-like domain is found at 945–1081; that stretch reads SRLPEKGTVL…YDLQGLHASL (137 aa). Residues 945–1081 are allosteric domain; sequence SRLPEKGTVL…YDLQGLHASL (137 aa).

The protein belongs to the CarB family. Composed of two chains; the small (or glutamine) chain promotes the hydrolysis of glutamine to ammonia, which is used by the large (or ammonia) chain to synthesize carbamoyl phosphate. Tetramer of heterodimers (alpha,beta)4. It depends on Mg(2+) as a cofactor. Requires Mn(2+) as cofactor.

It carries out the reaction hydrogencarbonate + L-glutamine + 2 ATP + H2O = carbamoyl phosphate + L-glutamate + 2 ADP + phosphate + 2 H(+). The catalysed reaction is hydrogencarbonate + NH4(+) + 2 ATP = carbamoyl phosphate + 2 ADP + phosphate + 2 H(+). The protein operates within amino-acid biosynthesis; L-arginine biosynthesis; carbamoyl phosphate from bicarbonate: step 1/1. It participates in pyrimidine metabolism; UMP biosynthesis via de novo pathway; (S)-dihydroorotate from bicarbonate: step 1/3. Its function is as follows. Large subunit of the glutamine-dependent carbamoyl phosphate synthetase (CPSase). CPSase catalyzes the formation of carbamoyl phosphate from the ammonia moiety of glutamine, carbonate, and phosphate donated by ATP, constituting the first step of 2 biosynthetic pathways, one leading to arginine and/or urea and the other to pyrimidine nucleotides. The large subunit (synthetase) binds the substrates ammonia (free or transferred from glutamine from the small subunit), hydrogencarbonate and ATP and carries out an ATP-coupled ligase reaction, activating hydrogencarbonate by forming carboxy phosphate which reacts with ammonia to form carbamoyl phosphate. In Ralstonia nicotianae (strain ATCC BAA-1114 / GMI1000) (Ralstonia solanacearum), this protein is Carbamoyl phosphate synthase large chain.